The sequence spans 289 residues: 4-diphosphocytidyl-2-C-methyl-D-erythritol kinase (289 aa).

The active site involves Lys-11. Pro-93–Ala-103 contacts ATP. Residue Asp-135 is part of the active site.

It belongs to the GHMP kinase family. IspE subfamily.

The enzyme catalyses 4-CDP-2-C-methyl-D-erythritol + ATP = 4-CDP-2-C-methyl-D-erythritol 2-phosphate + ADP + H(+). It functions in the pathway isoprenoid biosynthesis; isopentenyl diphosphate biosynthesis via DXP pathway; isopentenyl diphosphate from 1-deoxy-D-xylulose 5-phosphate: step 3/6. In terms of biological role, catalyzes the phosphorylation of the position 2 hydroxy group of 4-diphosphocytidyl-2C-methyl-D-erythritol. The chain is 4-diphosphocytidyl-2-C-methyl-D-erythritol kinase from Thermoanaerobacter sp. (strain X514).